The chain runs to 179 residues: Ribosome maturation factor RimM (179 aa).

The PRC barrel domain occupies 96–175 (KDEYFWFDIE…IITVIGAMDI (80 aa)).

Belongs to the RimM family. Binds ribosomal protein uS19.

The protein resides in the cytoplasm. Functionally, an accessory protein needed during the final step in the assembly of 30S ribosomal subunit, possibly for assembly of the head region. Essential for efficient processing of 16S rRNA. May be needed both before and after RbfA during the maturation of 16S rRNA. It has affinity for free ribosomal 30S subunits but not for 70S ribosomes. The chain is Ribosome maturation factor RimM from Sulfurimonas denitrificans (strain ATCC 33889 / DSM 1251) (Thiomicrospira denitrificans (strain ATCC 33889 / DSM 1251)).